The chain runs to 164 residues: Vasopressin-neurophysin 2-copeptin (164 aa).

An N-terminal signal peptide occupies residues 1–19; the sequence is MPDTMLPACFLGLLAFSSA. The cysteines at positions 20 and 25 are disulfide-linked. G28 is modified (glycine amide). 7 disulfide bridges follow: C41–C85, C44–C58, C52–C75, C59–C65, C92–C104, C98–C116, and C105–C110. A glycan (N-linked (GlcNAc...) asparagine) is linked at N131.

The protein belongs to the vasopressin/oxytocin family. As to quaternary structure, interacts with vasopressin receptors V1bR/AVPR1B (Ki=85 pM), V1aR/AVPR1A (Ki=0.6 nM) and V2R/AVPR2 (Ki=4.9 nM). Interacts with oxytocin receptor (OXTR) (Ki=110 nM). (Microbial infection) May interact with SARS coronavirus-2/SARS-CoV-2; they may form a complex with secreted ACE2.

Its subcellular location is the secreted. Specifically binds vasopressin. Its function is as follows. Has a direct antidiuretic action on the kidney, it also causes vasoconstriction of the peripheral vessels. Acts by binding to vasopressin receptors (V1bR/AVPR1B, V1aR/AVPR1A, and V2R/AVPR2). In Homo sapiens (Human), this protein is Vasopressin-neurophysin 2-copeptin (AVP).